The following is a 392-amino-acid chain: Glutamate 5-kinase (392 aa).

Lys-17 is an ATP binding site. The substrate site is built by Ser-57, Asp-144, and Asn-156. ATP is bound at residue Ser-176–Asp-177. Residues Ala-282–Ala-359 form the PUA domain. The disordered stretch occupies residues Thr-373–Ala-392.

Belongs to the glutamate 5-kinase family.

It localises to the cytoplasm. It catalyses the reaction L-glutamate + ATP = L-glutamyl 5-phosphate + ADP. The protein operates within amino-acid biosynthesis; L-proline biosynthesis; L-glutamate 5-semialdehyde from L-glutamate: step 1/2. In terms of biological role, catalyzes the transfer of a phosphate group to glutamate to form L-glutamate 5-phosphate. The sequence is that of Glutamate 5-kinase from Allorhizobium ampelinum (strain ATCC BAA-846 / DSM 112012 / S4) (Agrobacterium vitis (strain S4)).